A 356-amino-acid chain; its full sequence is Peptide chain release factor 1 (356 aa).

N5-methylglutamine is present on Gln-232. The tract at residues 281 to 301 (ERQSSELSADRKAQVGSGDRS) is disordered.

It belongs to the prokaryotic/mitochondrial release factor family. Methylated by PrmC. Methylation increases the termination efficiency of RF1.

The protein resides in the cytoplasm. Its function is as follows. Peptide chain release factor 1 directs the termination of translation in response to the peptide chain termination codons UAG and UAA. In Desulfovibrio desulfuricans (strain ATCC 27774 / DSM 6949 / MB), this protein is Peptide chain release factor 1.